Here is a 578-residue protein sequence, read N- to C-terminus: Vacuolar protein 8 (578 aa).

ARM repeat units lie at residues 58–95 (NRAE…FAEI), 96–135 (TERD…NLAV), 137–176 (ADNK…NLAT), 178–217 (EDNK…NMTH), 219–258 (DDNR…NIAV), 262–301 (NRKR…NLAS), 303–342 (EKYQ…NISI), 344–384 (PLNE…NLAA), and 428–467 (DELK…NLSS).

The protein belongs to the beta-catenin family.

The protein localises to the vacuole membrane. Functionally, functions in both vacuole inheritance and protein targeting from the cytoplasm to vacuole. This Aspergillus oryzae (strain ATCC 42149 / RIB 40) (Yellow koji mold) protein is Vacuolar protein 8 (vac8).